Reading from the N-terminus, the 472-residue chain is Ribulose bisphosphate carboxylase large chain (472 aa).

Positions 115 and 165 each coordinate substrate. The active-site Proton acceptor is the Lys-167. Position 169 (Lys-169) interacts with substrate. Positions 193, 195, and 196 each coordinate Mg(2+). Residue Lys-193 is modified to N6-carboxylysine. Catalysis depends on His-286, which acts as the Proton acceptor. Residues Arg-287, His-319, and Ser-371 each coordinate substrate.

The protein belongs to the RuBisCO large chain family. Type I subfamily. As to quaternary structure, heterohexadecamer of 8 large chains and 8 small chains. Requires Mg(2+) as cofactor.

The enzyme catalyses 2 (2R)-3-phosphoglycerate + 2 H(+) = D-ribulose 1,5-bisphosphate + CO2 + H2O. The catalysed reaction is D-ribulose 1,5-bisphosphate + O2 = 2-phosphoglycolate + (2R)-3-phosphoglycerate + 2 H(+). Functionally, ruBisCO catalyzes two reactions: the carboxylation of D-ribulose 1,5-bisphosphate, the primary event in carbon dioxide fixation, as well as the oxidative fragmentation of the pentose substrate. Both reactions occur simultaneously and in competition at the same active site. The chain is Ribulose bisphosphate carboxylase large chain from Solemya velum gill symbiont.